We begin with the raw amino-acid sequence, 318 residues long: Zinc chaperone YjiA (318 aa).

Position 11-19 (Gly11–Thr19) interacts with GTP. Zn(2+)-binding residues include Glu37, Glu42, Cys66, Glu74, and His114. The short motif at Cys64–Cys67 is the CXCC motif element. Asp161 lines the GTP pocket. Positions 167, 170, and 187 each coordinate Zn(2+). Positions Ile224 to Gly315 constitute a CobW C-terminal domain.

It belongs to the SIMIBI class G3E GTPase family. ZNG1 subfamily. As to quaternary structure, monomer in the apo form. Metal binding induces oligomerization. Forms homodimers and higher oligomers.

The enzyme catalyses GTP + H2O = GDP + phosphate + H(+). With respect to regulation, GTPase activity is inhibited by metal binding. Activity is decreased in the presence of Co(II) or Ni(II), and is completely inhibited in the presence of Zn(II). Its function is as follows. Zinc chaperone that directly transfers zinc cofactor to target proteins, thereby activating them. Zinc is transferred from the CXCC motif in the GTPase domain to the zinc binding site in target proteins in a process requiring GTP hydrolysis. This is Zinc chaperone YjiA (yjiA) from Escherichia coli (strain K12).